The sequence spans 551 residues: Dihydroxy-acid dehydratase (551 aa).

Asp78 lines the Mg(2+) pocket. Cys119 contributes to the [2Fe-2S] cluster binding site. Positions 120 and 121 each coordinate Mg(2+). Lys121 carries the post-translational modification N6-carboxylysine. [2Fe-2S] cluster is bound at residue Cys191. Glu442 lines the Mg(2+) pocket. Ser468 serves as the catalytic Proton acceptor.

Belongs to the IlvD/Edd family. As to quaternary structure, homodimer. Requires [2Fe-2S] cluster as cofactor. Mg(2+) serves as cofactor.

The enzyme catalyses (2R)-2,3-dihydroxy-3-methylbutanoate = 3-methyl-2-oxobutanoate + H2O. It carries out the reaction (2R,3R)-2,3-dihydroxy-3-methylpentanoate = (S)-3-methyl-2-oxopentanoate + H2O. It participates in amino-acid biosynthesis; L-isoleucine biosynthesis; L-isoleucine from 2-oxobutanoate: step 3/4. It functions in the pathway amino-acid biosynthesis; L-valine biosynthesis; L-valine from pyruvate: step 3/4. In terms of biological role, functions in the biosynthesis of branched-chain amino acids. Catalyzes the dehydration of (2R,3R)-2,3-dihydroxy-3-methylpentanoate (2,3-dihydroxy-3-methylvalerate) into 2-oxo-3-methylpentanoate (2-oxo-3-methylvalerate) and of (2R)-2,3-dihydroxy-3-methylbutanoate (2,3-dihydroxyisovalerate) into 2-oxo-3-methylbutanoate (2-oxoisovalerate), the penultimate precursor to L-isoleucine and L-valine, respectively. This chain is Dihydroxy-acid dehydratase, found in Halothermothrix orenii (strain H 168 / OCM 544 / DSM 9562).